The following is a 245-amino-acid chain: Ubiquinone/menaquinone biosynthesis C-methyltransferase UbiE (245 aa).

S-adenosyl-L-methionine contacts are provided by residues Thr71, Asp92, and 118-119; that span reads DA.

It belongs to the class I-like SAM-binding methyltransferase superfamily. MenG/UbiE family.

It carries out the reaction a 2-demethylmenaquinol + S-adenosyl-L-methionine = a menaquinol + S-adenosyl-L-homocysteine + H(+). The catalysed reaction is a 2-methoxy-6-(all-trans-polyprenyl)benzene-1,4-diol + S-adenosyl-L-methionine = a 5-methoxy-2-methyl-3-(all-trans-polyprenyl)benzene-1,4-diol + S-adenosyl-L-homocysteine + H(+). It participates in quinol/quinone metabolism; menaquinone biosynthesis; menaquinol from 1,4-dihydroxy-2-naphthoate: step 2/2. It functions in the pathway cofactor biosynthesis; ubiquinone biosynthesis. Methyltransferase required for the conversion of demethylmenaquinol (DMKH2) to menaquinol (MKH2) and the conversion of 2-polyprenyl-6-methoxy-1,4-benzoquinol (DDMQH2) to 2-polyprenyl-3-methyl-6-methoxy-1,4-benzoquinol (DMQH2). This is Ubiquinone/menaquinone biosynthesis C-methyltransferase UbiE from Neisseria meningitidis serogroup A / serotype 4A (strain DSM 15465 / Z2491).